The primary structure comprises 607 residues: ATP-dependent DNA helicase II subunit 1 (607 aa).

The 212-residue stretch at 241–452 (MDLGNDVRIG…IETMQRILRG (212 aa)) folds into the Ku domain. The SAP domain occupies 570-604 (IKALKVSQLKDILRDRGLRVSGKKADLLDNLTNYV).

It belongs to the ku70 family. As to quaternary structure, heterodimer of pku70 and pku80.

The protein localises to the nucleus. It is found in the chromosome. It localises to the telomere. It carries out the reaction ATP + H2O = ADP + phosphate + H(+). Single-stranded DNA-dependent ATP-dependent helicase. Involved in non-homologous end joining (NHEJ) DNA double strand break repair. DNA-binding is sequence-independent but has a high affinity to nicks in double-stranded DNA and to the ends of duplex DNA. Binds to naturally occurring chromosomal ends, and therefore provides chromosomal end protection. Required also for telomere recombination to repair telomeric ends in the absence of telomerase. ku70, of the ku70/ku80 heterodimer, binds to the stem loop of tlc1, the RNA component of telomerase. Required for mating-type switching. Involved in telomere maintenance. Interacts with telomeric repeats and subtelomeric sequences thereby controlling telomere length and protecting against subtelomeric rearrangement. Maintains telomeric chromatin, which is involved in silencing the expression of genes located at the telomere. This Schizosaccharomyces pombe (strain 972 / ATCC 24843) (Fission yeast) protein is ATP-dependent DNA helicase II subunit 1 (pku70).